Here is a 196-residue protein sequence, read N- to C-terminus: Rho-related GTP-binding protein RhoB (196 aa).

GTP is bound at residue 12 to 19 (GDGACGKT). Residue Y34 is glycosylated (O-linked (GlcNAc) tyrosine; by Photorhabdus PAU_02230). An Effector region motif is present at residues 34-42 (YVPTVFENY). (Microbial infection) O-linked (Glc) threonine; by C.difficile toxins TcdA and TcdB glycosylation is present at T37. At N41 the chain carries ADP-ribosylasparagine; by botulinum toxin. GTP contacts are provided by residues 59–63 (DTAGQ) and 117–120 (NKKD). At Y154 the chain carries Phosphotyrosine. S-palmitoyl cysteine attachment occurs at residues C189 and C192. A Cysteine methyl ester modification is found at C193. Residue C193 is the site of S-farnesyl cysteine; in plasma membrane form attachment. C193 is lipidated: S-geranylgeranyl cysteine; in endosomal form. A propeptide spans 194-196 (KVL) (removed in mature form).

The protein belongs to the small GTPase superfamily. Rho family. Binds ROCK1 and ROCK2. Also binds PKN1/PRK1. Interacts with ARGGEF3. Interacts with RTKN. Interacts with AKAP13. Interacts with RIPOR1. Prenylation specifies the subcellular location of RHOB. The farnesylated form is localized to the plasma membrane while the geranylgeranylated form is localized to the endosome. Post-translationally, (Microbial infection) Glycosylated at Tyr-34 by Photorhabdus asymbiotica toxin PAU_02230. Mono-O-GlcNAcylation by PAU_02230 inhibits downstream signaling by an impaired interaction with diverse regulator and effector proteins of Rho and leads to actin disassembly. In terms of processing, (Microbial infection) Glucosylated at Thr-37 by C.difficile toxins TcdA and TcdB in the colonic epithelium. Monoglucosylation completely prevents the recognition of the downstream effector, blocking the GTPases in their inactive form, leading to actin cytoskeleton disruption.

The protein localises to the late endosome membrane. It localises to the cell membrane. It is found in the nucleus. Its subcellular location is the cleavage furrow. Its function is as follows. Mediates apoptosis in neoplastically transformed cells after DNA damage. Not essential for development but affects cell adhesion and growth factor signaling in transformed cells. Plays a negative role in tumorigenesis as deletion causes tumor formation. Involved in intracellular protein trafficking of a number of proteins. Targets PKN1 to endosomes and is involved in trafficking of the EGF receptor from late endosomes to lysosomes. Also required for stability and nuclear trafficking of AKT1/AKT which promotes endothelial cell survival during vascular development. Serves as a microtubule-dependent signal that is required for the myosin contractile ring formation during cell cycle cytokinesis. Required for genotoxic stress-induced cell death in breast cancer cells. This chain is Rho-related GTP-binding protein RhoB (RHOB), found in Homo sapiens (Human).